The sequence spans 379 residues: MSKRDFYEVLGVSRDASERDIKKAYKRLAMKFHPDRNQGDDTAAEKFKEVKVAYEILTDAQKRSAYDQYGHAAFEQGGMGGGGFGGGGADFGDIFGDVFGDIFGGGRRGGQQRAQRGSDLRYNMELTLEEAGRGCDKEIEVPTLVSCDPCEGTGAKKGTSSTTCSTCHGQGQVQMRQGFFAVQQACPTCHGKGKIIKDPCNSCHGEGRVHKTKTLNVKIPSGVDTGDRIRLSGEGEAGEHGAPAGDLYVQVHVKEHNIFERDGNNLYCEVPVSFTMAALGGEVEVPTLDGRVSLKVPLETQTGRMFRMRGKGVKGVRTHSAGDLIVKLIVETPVKLTKRQKELLQEFQESFDGKDAKKHNPKSEGFLSGVKNFFDDLTK.

The 66-residue stretch at 5 to 70 (DFYEVLGVSR…QKRSAYDQYG (66 aa)) folds into the J domain. The CR-type zinc-finger motif lies at 134-212 (GCDKEIEVPT…CHGEGRVHKT (79 aa)). Zn(2+) is bound by residues C147, C150, C164, C167, C186, C189, C200, and C203. CXXCXGXG motif repeat units lie at residues 147-154 (CDPCEGTG), 164-171 (CSTCHGQG), 186-193 (CPTCHGKG), and 200-207 (CNSCHGEG).

This sequence belongs to the DnaJ family. Homodimer. It depends on Zn(2+) as a cofactor.

It is found in the cytoplasm. Functionally, participates actively in the response to hyperosmotic and heat shock by preventing the aggregation of stress-denatured proteins and by disaggregating proteins, also in an autonomous, DnaK-independent fashion. Unfolded proteins bind initially to DnaJ; upon interaction with the DnaJ-bound protein, DnaK hydrolyzes its bound ATP, resulting in the formation of a stable complex. GrpE releases ADP from DnaK; ATP binding to DnaK triggers the release of the substrate protein, thus completing the reaction cycle. Several rounds of ATP-dependent interactions between DnaJ, DnaK and GrpE are required for fully efficient folding. Also involved, together with DnaK and GrpE, in the DNA replication of plasmids through activation of initiation proteins. The chain is Chaperone protein DnaJ from Aliivibrio fischeri (strain ATCC 700601 / ES114) (Vibrio fischeri).